Reading from the N-terminus, the 134-residue chain is NADH-quinone oxidoreductase subunit A (134 aa).

The next 3 helical transmembrane spans lie at 12 to 32, 64 to 84, and 93 to 113; these read FAIY…LAAL, FYLV…LFAW, and WVGF…LVYL.

The protein belongs to the complex I subunit 3 family. As to quaternary structure, NDH-1 is composed of 13 different subunits. Subunits NuoA, H, J, K, L, M, N constitute the membrane sector of the complex.

It is found in the cell inner membrane. The enzyme catalyses a quinone + NADH + 5 H(+)(in) = a quinol + NAD(+) + 4 H(+)(out). Functionally, NDH-1 shuttles electrons from NADH, via FMN and iron-sulfur (Fe-S) centers, to quinones in the respiratory chain. The immediate electron acceptor for the enzyme in this species is believed to be ubiquinone. Couples the redox reaction to proton translocation (for every two electrons transferred, four hydrogen ions are translocated across the cytoplasmic membrane), and thus conserves the redox energy in a proton gradient. The polypeptide is NADH-quinone oxidoreductase subunit A (Shewanella oneidensis (strain ATCC 700550 / JCM 31522 / CIP 106686 / LMG 19005 / NCIMB 14063 / MR-1)).